The primary structure comprises 395 residues: D-alanine--D-alanine ligase (395 aa).

The 220-residue stretch at 172–391 (KVVLGAAGIP…YTELITRLIE (220 aa)) folds into the ATP-grasp domain. Residue 204–266 (DAGLTYPLFI…EQGIDGREIE (63 aa)) coordinates ATP. Mg(2+) contacts are provided by Asp-345, Glu-358, and Asn-360.

This sequence belongs to the D-alanine--D-alanine ligase family. The cofactor is Mg(2+). Mn(2+) is required as a cofactor.

It is found in the cytoplasm. It carries out the reaction 2 D-alanine + ATP = D-alanyl-D-alanine + ADP + phosphate + H(+). The protein operates within cell wall biogenesis; peptidoglycan biosynthesis. Functionally, cell wall formation. The sequence is that of D-alanine--D-alanine ligase from Bifidobacterium longum subsp. infantis (strain ATCC 15697 / DSM 20088 / JCM 1222 / NCTC 11817 / S12).